The chain runs to 136 residues: MLQPKRTKFRKMHKGRNRGLAQGTDVSFGTFGLKAVGRGRLTARQIEAARRAMTRAVKRQGKIWIRVFPDKPITEKPLEVRMGKGKGNVEYWVALIQPGKVLYEMDGVPEEVAREAFKLAAAKLPIKTTFVTKTVM.

This sequence belongs to the universal ribosomal protein uL16 family. In terms of assembly, part of the 50S ribosomal subunit.

In terms of biological role, binds 23S rRNA and is also seen to make contacts with the A and possibly P site tRNAs. The polypeptide is Large ribosomal subunit protein uL16 (Serratia proteamaculans (strain 568)).